The sequence spans 374 residues: Alginate lyase (374 aa).

An N-terminal signal peptide occupies residues 1–23 (MHKTRLALSCLLGSLLLSGAVHA). Substrate contacts are provided by residues 62–63 (SK), 135–136 (HT), and tyrosine 253.

It belongs to the polysaccharide lyase 5 family.

It is found in the periplasm. It catalyses the reaction Eliminative cleavage of alginate to give oligosaccharides with 4-deoxy-alpha-L-erythro-hex-4-enuronosyl groups at their non-reducing ends and beta-D-mannuronate at their reducing end.. Catalyzes the depolymerization of alginate by cleaving the beta-1,4 glycosidic bond between two adjacent sugar residues via a beta-elimination mechanism. May serve to degrade mislocalized alginate that is trapped in the periplasmic space. In Azotobacter vinelandii (strain DJ / ATCC BAA-1303), this protein is Alginate lyase.